A 59-amino-acid chain; its full sequence is Mitochondrial sheath formation-associated protein (59 aa).

Over 1–6 the chain is Mitochondrial intermembrane; the sequence is MIVLGW. 2 consecutive transmembrane segments (helical) span residues 2-22 and 7-23; these read IVLG…FPEL and MFFV…PELM. Topologically, residues 24–40 are cytoplasmic; the sequence is PPTLKWQERWPVQESKT.

As to quaternary structure, interacts with VDAC3.

It is found in the mitochondrion outer membrane. In terms of biological role, regulates sperm development. May be involved in mitochondrial sheath formation. The sequence is that of Mitochondrial sheath formation-associated protein from Homo sapiens (Human).